The sequence spans 117 residues: PBP1-interacting protein XAC1 (117 aa).

Residues 1–60 are disordered; the sequence is MSKAPSQPAKKWMSARTLAKSEDATNRKSNTAAPASQPSQQPASVMHERPTPPPPAPVQL. Low complexity predominate over residues 32–44; the sequence is AAPASQPSQQPAS.

As to quaternary structure, forms a complex composed of at least MKT1, PBP1, XAC1 and LSM12. Forms a complex composed of at least MKT1L, PBP1, XAC1 and LSM12.

It is found in the cytoplasm. In terms of biological role, involved in post-transcriptional regulation of gene expression. This chain is PBP1-interacting protein XAC1, found in Trypanosoma brucei brucei (strain 927/4 GUTat10.1).